We begin with the raw amino-acid sequence, 492 residues long: Protein nucleotidyltransferase YdiU (492 aa).

The ATP site is built by G95, G97, R98, K118, D130, G131, R181, and R188. D257 (proton acceptor) is an active-site residue. Mg(2+) contacts are provided by N258 and D267. Residue D267 participates in ATP binding. Basic and acidic residues predominate over residues 466–475; that stretch reads YDDQPEHAEY. A disordered region spans residues 466–492; the sequence is YDDQPEHAEYRQPPPPSEKPYQTFCGT.

The protein belongs to the SELO family. Mg(2+) is required as a cofactor. The cofactor is Mn(2+).

It carries out the reaction L-seryl-[protein] + ATP = 3-O-(5'-adenylyl)-L-seryl-[protein] + diphosphate. The enzyme catalyses L-threonyl-[protein] + ATP = 3-O-(5'-adenylyl)-L-threonyl-[protein] + diphosphate. The catalysed reaction is L-tyrosyl-[protein] + ATP = O-(5'-adenylyl)-L-tyrosyl-[protein] + diphosphate. It catalyses the reaction L-histidyl-[protein] + UTP = N(tele)-(5'-uridylyl)-L-histidyl-[protein] + diphosphate. It carries out the reaction L-seryl-[protein] + UTP = O-(5'-uridylyl)-L-seryl-[protein] + diphosphate. The enzyme catalyses L-tyrosyl-[protein] + UTP = O-(5'-uridylyl)-L-tyrosyl-[protein] + diphosphate. Its function is as follows. Nucleotidyltransferase involved in the post-translational modification of proteins. It can catalyze the addition of adenosine monophosphate (AMP) or uridine monophosphate (UMP) to a protein, resulting in modifications known as AMPylation and UMPylation. This Syntrophotalea carbinolica (strain DSM 2380 / NBRC 103641 / GraBd1) (Pelobacter carbinolicus) protein is Protein nucleotidyltransferase YdiU.